The primary structure comprises 282 residues: NAD kinase (282 aa).

The active-site Proton acceptor is the Asp-67. NAD(+)-binding positions include 67-68 (DG), 140-141 (NE), His-151, Arg-170, Asp-172, and 183-188 (TAYNLS).

The protein belongs to the NAD kinase family. Requires a divalent metal cation as cofactor.

It is found in the cytoplasm. It carries out the reaction NAD(+) + ATP = ADP + NADP(+) + H(+). In terms of biological role, involved in the regulation of the intracellular balance of NAD and NADP, and is a key enzyme in the biosynthesis of NADP. Catalyzes specifically the phosphorylation on 2'-hydroxyl of the adenosine moiety of NAD to yield NADP. The chain is NAD kinase from Halobacterium salinarum (strain ATCC 700922 / JCM 11081 / NRC-1) (Halobacterium halobium).